A 176-amino-acid chain; its full sequence is Ribosome maturation factor RimP (176 aa).

It belongs to the RimP family.

It localises to the cytoplasm. In terms of biological role, required for maturation of 30S ribosomal subunits. The chain is Ribosome maturation factor RimP from Mycolicibacterium vanbaalenii (strain DSM 7251 / JCM 13017 / BCRC 16820 / KCTC 9966 / NRRL B-24157 / PYR-1) (Mycobacterium vanbaalenii).